The primary structure comprises 174 residues: Large ribosomal subunit protein bL17 (174 aa).

This sequence belongs to the bacterial ribosomal protein bL17 family. As to quaternary structure, part of the 50S ribosomal subunit. Contacts protein L32.

This Ruminiclostridium cellulolyticum (strain ATCC 35319 / DSM 5812 / JCM 6584 / H10) (Clostridium cellulolyticum) protein is Large ribosomal subunit protein bL17.